The chain runs to 465 residues: Sperm microtubule associated protein 2-like (465 aa).

Polar residues predominate over residues 1-29; it reads MENQEFLSSSAPSEVTDGQVSTEISTCSE. The tract at residues 1–140 is disordered; that stretch reads MENQEFLSSS…REAKETELLP (140 aa). Basic and acidic residues-rich tracts occupy residues 40-70 and 114-137; these read LDTH…QDQR and KARE…KETE. 8 THEG repeats span residues 174–192, 214–233, 260–279, 297–316, 333–352, 373–392, 409–428, and 446–465; these read RKCF…PKKQ, GALK…PKEV, PALF…PNGF, SLRI…AKGT, STLS…PRIK, AAMI…SKSV, ATTH…PNKR, and AALK…PLTR.

This chain is Sperm microtubule associated protein 2-like, found in Homo sapiens (Human).